The chain runs to 61 residues: Early 3 Conserved Region 1-alpha protein (61 aa).

Residues 1-14 (MSNSSNSTSLSNFS) lie on the Lumenal side of the membrane. N-linked (GlcNAc...) asparagine; by host glycosylation is found at asparagine 3, asparagine 6, and asparagine 12. A helical transmembrane segment spans residues 15–35 (GIGVGVILTLVILFILILALL). Residues 36–61 (CLRVAACCTHVCTYCQLFKRWGQHPR) are Cytoplasmic-facing.

It belongs to the adenoviridae E3-CR1 family. Interacts with E3 RID alpha and E3 RID beta. In terms of processing, only 1 of 3 three potential glycosylation sites is glycosylated. Oligosaccharides are not processed from high mannose to the complex type because the protein is retained in the endoplasmic reticulum.

The protein localises to the host endoplasmic reticulum membrane. The protein resides in the host cell membrane. Functionally, prevents infected cell apoptosis induced by the host immune system. May act by down-regulating host TRAIL receptors. May act in complex with E3 RID alpha and beta. May play a role on cellular apoptosis regulation in the ER. The chain is Early 3 Conserved Region 1-alpha protein from Human adenovirus C serotype 2 (HAdV-2).